We begin with the raw amino-acid sequence, 317 residues long: MSSSSDAIKAALEKGRAAGLSATGGKNADYIPFLASVPSDLFGLAVVTADGQTFKTGDADFAFAIESISKVFTLALVMEEIGPDSVREKVGADPTGLPFNSVIALELHNGKSLSPLVNAGAIATASLVPGDTADARWNNILECQCGFAGRRLKLSNEVNQSEQTTNFHNRAIAWLLYSAGTCYSDPMEAVDIYTRQCSTLVTATDLATMGATLAAGGVNPISGKRMVSAGNVAPILAEMTMEGLYTASGDWAYTVGLPGKSGVGGGIMAVVPGELAIAAFSPPLDPAGNSVKAMAAVAAVADSLGHNLYTTRGKVSS.

The substrate site is built by Ser-67, Asn-118, Glu-162, Asn-169, Tyr-193, Tyr-245, and Val-263.

It belongs to the glutaminase family. Homotetramer.

The catalysed reaction is L-glutamine + H2O = L-glutamate + NH4(+). This is Glutaminase from Brucella canis (strain ATCC 23365 / NCTC 10854 / RM-666).